A 544-amino-acid chain; its full sequence is CTP synthase (544 aa).

The amidoligase domain stretch occupies residues 1 to 266; the sequence is MTRFVFITGG…DREVLRHFNL (266 aa). Position 13 (Ser13) interacts with CTP. Ser13 is a UTP binding site. 14–19 provides a ligand contact to ATP; it reads SLGKGI. Residue Tyr54 coordinates L-glutamine. Position 71 (Asp71) interacts with ATP. 2 residues coordinate Mg(2+): Asp71 and Glu140. Residues 147-149, 187-192, and Lys223 each bind CTP; these read DIE and KTKPTQ. Residues 187 to 192 and Lys223 each bind UTP; that span reads KTKPTQ. Residues 292 to 543 form the Glutamine amidotransferase type-1 domain; it reads KIAIVGKYIT…VAAAVRQARL (252 aa). Residue Gly354 participates in L-glutamine binding. Residue Cys381 is the Nucleophile; for glutamine hydrolysis of the active site. L-glutamine contacts are provided by residues 382–385, Glu405, and Arg471; that span reads FGMQ. Residues His516 and Glu518 contribute to the active site.

Belongs to the CTP synthase family. In terms of assembly, homotetramer.

It catalyses the reaction UTP + L-glutamine + ATP + H2O = CTP + L-glutamate + ADP + phosphate + 2 H(+). The catalysed reaction is L-glutamine + H2O = L-glutamate + NH4(+). It carries out the reaction UTP + NH4(+) + ATP = CTP + ADP + phosphate + 2 H(+). It functions in the pathway pyrimidine metabolism; CTP biosynthesis via de novo pathway; CTP from UDP: step 2/2. Allosterically activated by GTP, when glutamine is the substrate; GTP has no effect on the reaction when ammonia is the substrate. The allosteric effector GTP functions by stabilizing the protein conformation that binds the tetrahedral intermediate(s) formed during glutamine hydrolysis. Inhibited by the product CTP, via allosteric rather than competitive inhibition. Catalyzes the ATP-dependent amination of UTP to CTP with either L-glutamine or ammonia as the source of nitrogen. Regulates intracellular CTP levels through interactions with the four ribonucleotide triphosphates. The protein is CTP synthase of Granulibacter bethesdensis (strain ATCC BAA-1260 / CGDNIH1).